Here is a 142-residue protein sequence, read N- to C-terminus: Large ribosomal subunit protein uL13 (142 aa).

It belongs to the universal ribosomal protein uL13 family. As to quaternary structure, part of the 50S ribosomal subunit.

In terms of biological role, this protein is one of the early assembly proteins of the 50S ribosomal subunit, although it is not seen to bind rRNA by itself. It is important during the early stages of 50S assembly. The chain is Large ribosomal subunit protein uL13 from Syntrophus aciditrophicus (strain SB).